A 321-amino-acid chain; its full sequence is Putrescine export system permease protein SapB (321 aa).

Topologically, residues 1 to 8 (MIIFTLRR) are cytoplasmic. Residues 9-29 (ILLLIVTLFLLTFVGFSLSYF) form a helical membrane-spanning segment. The Periplasmic portion of the chain corresponds to 30–80 (TPHAPLQGASLWNAWVFWFNGLIHWDFGVSSINGQPIAEQLKEVFPATMEL). Residues 74 to 302 (FPATMELCIL…SLVIIVNVIS (229 aa)) form the ABC transmembrane type-1 domain. A helical membrane pass occupies residues 81–101 (CILAFGFALIVGIPVGMIAGI). Residues 102–112 (TRHKWQDNLIN) are Cytoplasmic-facing. A helical transmembrane segment spans residues 113-133 (AIALLGFSIPVFWLALLLTLF). Topologically, residues 134–174 (CSLTLGWLPVSGRFDLLYEVKPITGFALIDAWLSDSPWRDE) are periplasmic. The helical transmembrane segment at 175-195 (MIMSAIRHMILPVITLSVAPT) threads the bilayer. At 196–248 (TEVIRLMRISTIEVYDQNYVKAAATRGLSRFTILRRHVLHNALPPVIPRLGLQ) the chain is on the cytoplasmic side. A helical membrane pass occupies residues 249 to 269 (FSTMLTLAMITEMVFSWPGLG). The Periplasmic portion of the chain corresponds to 270-280 (RWLINAIRQQD). A helical transmembrane segment spans residues 281–301 (YAAISAGVMVCGSLVIIVNVI). At 302–321 (SDILGAMANPLKHKEWYALR) the chain is on the cytoplasmic side.

It belongs to the binding-protein-dependent transport system permease family. OppBC subfamily.

The protein resides in the cell inner membrane. Part of a putrescine export transport system, does not play a role in resistance to antimicrobial peptides. This chain is Putrescine export system permease protein SapB (sapB), found in Escherichia coli (strain K12).